An 82-amino-acid polypeptide reads, in one-letter code: 4-(gamma-L-glutamylamino)butanoyl-[BtrI acyl-carrier protein] monooxygenase BtrO (82 aa).

In terms of assembly, homotetramer.

The enzyme catalyses 4-(gamma-L-glutamylamino)butanoyl-[BtrI ACP] + FMNH2 + O2 = 4-(gamma-L-glutamylamino)-(2S)-2-hydroxybutanoyl-[BtrI ACP] + FMN + H2O + H(+). It functions in the pathway antibiotic biosynthesis; butirosin biosynthesis. NAD(P)H:FMN oxidoreductase component of a two-component system involved in the biosynthesis of the side chain of the aminoglycoside antibiotics in the biosynthetic pathway of butirosin. Together with BtrO, mediates hydroxylation of gamma-L-Glu-GABA-S-BtrI. The sequence is that of 4-(gamma-L-glutamylamino)butanoyl-[BtrI acyl-carrier protein] monooxygenase BtrO (btrV) from Niallia circulans (Bacillus circulans).